The sequence spans 141 residues: Single-stranded DNA-binding protein 2 (141 aa).

Residues 1–104 (MLNRTVLVGR…VVADSVQFLE (104 aa)) form the SSB domain. The segment at 104–141 (EPKNNNQQQNNNYQQQRQTQTGNNPFDNNADSIEDLPF) is disordered. The segment covering 107-127 (NNNQQQNNNYQQQRQTQTGNN) has biased composition (low complexity).

Homotetramer.

The protein is Single-stranded DNA-binding protein 2 (ssb-p) of Staphylococcus aureus (strain Mu50 / ATCC 700699).